A 902-amino-acid chain; its full sequence is Cytosolic 10-formyltetrahydrofolate dehydrogenase (902 aa).

Residues 1 to 310 (MKIAVIGQSL…LASNFFKGAA (310 aa)) form a hydrolase domain region. The residue at position 9 (serine 9) is a Phosphoserine. Lysine 38 carries the post-translational modification N6-succinyllysine. 88–90 (QFI) contacts (6R)-10-formyltetrahydrofolate. Histidine 106 (proton donor) is an active-site residue. Residue aspartate 142 participates in (6R)-10-formyltetrahydrofolate binding. The Carrier domain maps to 318–395 (EAELVTAEAV…DFIQLLVRKL (78 aa)). The residue at position 354 (serine 354) is an O-(pantetheine 4'-phosphoryl)serine. The aldehyde dehydrogenase domain stretch occupies residues 417-902 (TVRMPHQLFI…LRVKTVTFEY (486 aa)). NADP(+) is bound by residues 571–573 (IPW) and 597–600 (KPAQ). Residues serine 629 and serine 631 each carry the phosphoserine modification. Residues 630–635 (GSLVGQ) and 650–651 (GS) each bind NADP(+). Lysine 660 carries the post-translational modification N6-succinyllysine. Glutamate 673 acts as the Proton acceptor in catalysis. 673 to 674 (EL) contacts NADP(+). The active-site Proton donor is cysteine 707. Lysine 757 serves as a coordination point for NADP(+). N6-succinyllysine is present on lysine 767. 804–806 (ESF) contributes to the NADP(+) binding site. Serine 825 bears the Phosphoserine mark. Lysine 882 is modified (N6-acetyllysine).

This sequence in the N-terminal section; belongs to the GART family. The protein in the C-terminal section; belongs to the aldehyde dehydrogenase family. ALDH1L subfamily. As to quaternary structure, homotetramer. Post-translationally, phosphopantetheinylation at Ser-354 by AASDHPPT is required for the formyltetrahydrofolate dehydrogenase activity. Highly expressed in liver, pancreas and kidney.

The protein resides in the cytoplasm. It localises to the cytosol. The catalysed reaction is (6R)-10-formyltetrahydrofolate + NADP(+) + H2O = (6S)-5,6,7,8-tetrahydrofolate + CO2 + NADPH + H(+). Cytosolic 10-formyltetrahydrofolate dehydrogenase that catalyzes the NADP(+)-dependent conversion of 10-formyltetrahydrofolate to tetrahydrofolate and carbon dioxide. May also have an NADP(+)-dependent aldehyde dehydrogenase activity towards formaldehyde, acetaldehyde, propionaldehyde, and benzaldehyde. This Homo sapiens (Human) protein is Cytosolic 10-formyltetrahydrofolate dehydrogenase.